Here is a 481-residue protein sequence, read N- to C-terminus: Aspartyl/glutamyl-tRNA(Asn/Gln) amidotransferase subunit B (481 aa).

This sequence belongs to the GatB/GatE family. GatB subfamily. Heterotrimer of A, B and C subunits.

It catalyses the reaction L-glutamyl-tRNA(Gln) + L-glutamine + ATP + H2O = L-glutaminyl-tRNA(Gln) + L-glutamate + ADP + phosphate + H(+). The catalysed reaction is L-aspartyl-tRNA(Asn) + L-glutamine + ATP + H2O = L-asparaginyl-tRNA(Asn) + L-glutamate + ADP + phosphate + 2 H(+). Allows the formation of correctly charged Asn-tRNA(Asn) or Gln-tRNA(Gln) through the transamidation of misacylated Asp-tRNA(Asn) or Glu-tRNA(Gln) in organisms which lack either or both of asparaginyl-tRNA or glutaminyl-tRNA synthetases. The reaction takes place in the presence of glutamine and ATP through an activated phospho-Asp-tRNA(Asn) or phospho-Glu-tRNA(Gln). The sequence is that of Aspartyl/glutamyl-tRNA(Asn/Gln) amidotransferase subunit B from Fusobacterium nucleatum subsp. nucleatum (strain ATCC 25586 / DSM 15643 / BCRC 10681 / CIP 101130 / JCM 8532 / KCTC 2640 / LMG 13131 / VPI 4355).